Consider the following 359-residue polypeptide: 4-galactosyl-N-acetylglucosaminide 3-alpha-L-fucosyltransferase 9 (359 aa).

At Met1–Pro11 the chain is on the cytoplasmic side. A helical; Signal-anchor for type II membrane protein transmembrane segment spans residues Phe12–Pro32. The Lumenal portion of the chain corresponds to Thr33–Asn359. N-linked (GlcNAc...) asparagine glycosylation is present at Asn62. Residues Glu63 to Tyr168 form an acceptor-binding region. Gln75 is an a beta-D-galactosyl-(1-&gt;4)-N-acetyl-beta-D-glucosaminyl derivative binding site. 3 disulfide bridges follow: Cys82–Cys335, Cys91–Cys338, and Cys190–Cys238. Residue Asn101 is glycosylated (N-linked (GlcNAc...) asparagine). Glu137 lines the a beta-D-galactosyl-(1-&gt;4)-N-acetyl-beta-D-glucosaminyl derivative pocket. Glu137 functions as the Nucleophile in the catalytic mechanism. Residue Glu137 participates in GDP-beta-L-fucose binding. N-linked (GlcNAc...) asparagine glycosylation is present at Asn153. Residues Tyr168, Val192, Ser194, Asn195, Arg202, Val226, Tyr241, Asn246, Tyr252, Glu255, and Lys256 each coordinate GDP-beta-L-fucose. Residues Gly169–Leu326 are donor-binding. The acceptor-binding stretch occupies residues Pro327–Asn359.

This sequence belongs to the glycosyltransferase 10 family. In terms of assembly, homodimer. N-glycosylated with complex-type N-glycans.

It is found in the golgi apparatus. The protein resides in the trans-Golgi network membrane. Its subcellular location is the golgi apparatus membrane. The catalysed reaction is a beta-D-galactosyl-(1-&gt;4)-N-acetyl-beta-D-glucosaminyl derivative + GDP-beta-L-fucose = a beta-D-galactosyl-(1-&gt;4)-[alpha-L-fucosyl-(1-&gt;3)]-N-acetyl-beta-D-glucosaminyl derivative + GDP + H(+). The enzyme catalyses an alpha-Neu5Ac-(2-&gt;3)-beta-D-Gal-(1-&gt;4)-beta-D-GlcNAc-(1-&gt;3)-beta-D-Gal-(1-&gt;4)-beta-D-GlcNAc derivative + GDP-beta-L-fucose = an alpha-Neu5Ac-(2-&gt;3)-beta-D-Gal-(1-&gt;4)-beta-D-GlcNAc-(1-&gt;3)-beta-D-Gal-(1-&gt;4)-[alpha-L-Fuc-(1-&gt;3)]-beta-D-GlcNAc derivative + GDP + H(+). It carries out the reaction alpha-N-glycoloylneuraminosyl-(2-&gt;3)-beta-D-galactosyl-(1-&gt;4)-N-acetyl-beta-D-glucosaminyl-(1-&gt;3)-beta-D-galactosyl-(1-&gt;4)-N-acetyl-beta-D-glucosaminyl-(1-&gt;3)-beta-D-galactosyl-(1-&gt;4)-beta-D-glucosyl-(1&lt;-&gt;1')-ceramide + GDP-beta-L-fucose = alpha-N-glycoloylneuraminosyl-(2-&gt;3)-beta-D-galactosyl-(1-&gt;4)-N-acetyl-beta-D-glucosaminyl-(1-&gt;3)-beta-D-galactosyl-(1-&gt;4)-[alpha-L-fucosyl-(1-&gt;3)]-N-acetyl-beta-D-glucosaminyl-(1-&gt;3)-beta-D-galactosyl-(1-&gt;4)-beta-D-glucosyl-(1&lt;-&gt;1')-ceramide + GDP + H(+). It catalyses the reaction alpha-D-galactosyl-(1-&gt;3)-beta-D-galactosyl-(1-&gt;4)-N-acetyl-beta-D-glucosaminyl-(1-&gt;3)-beta-D-galactosyl-(1-&gt;4)-beta-D-glucosyl-(1&lt;-&gt;1')-ceramide + GDP-beta-L-fucose = a neolactoside IV(3)-alpha-Gal,III(3)-alpha-Fuc-nLc4Cer + GDP + H(+). The catalysed reaction is a neolactoside nLc4Cer + GDP-beta-L-fucose = a neolactoside III(3)-alpha-Fuc-nLc4Cer + GDP + H(+). The enzyme catalyses an N-acetyl-alpha-neuraminyl-(2-&gt;3)-beta-D-galactosyl-(1-&gt;4)-N-acetyl-beta-D-glucosaminyl derivative + GDP-beta-L-fucose = an alpha-Neu5Ac-(2-&gt;3)-beta-D-Gal-(1-&gt;4)-[alpha-L-Fuc-(1-&gt;3)]-beta-D-GlcNAc derivative + GDP + H(+). It carries out the reaction beta-D-Gal-(1-&gt;4)-beta-D-GlcNAc-(1-&gt;3)-beta-D-Gal-(1-&gt;4)-D-Glc + GDP-beta-L-fucose = beta-D-Gal-(1-&gt;4)-[alpha-L-Fuc-(1-&gt;3)]-beta-D-GlcNAc-(1-&gt;3)-beta-D-Gal-(1-&gt;4)-D-Glc + GDP + H(+). It catalyses the reaction an alpha-L-Fuc-(1-&gt;2)-beta-D-Gal-(1-&gt;4)-beta-D-GlcNAc derivative + GDP-beta-L-fucose = an alpha-L-Fuc-(1-&gt;2)-beta-D-Gal-(1-&gt;4)-[alpha-L-Fuc-(1-&gt;3)]-beta-D-GlcNAc derivative + GDP + H(+). The protein operates within protein modification; protein glycosylation. Its pathway is glycolipid biosynthesis. Its activity is regulated as follows. Activated by Mn2+. Its function is as follows. Catalyzes alpha(1-&gt;3) linkage of fucosyl moiety transferred from GDP-beta-L-fucose to N-acetyl glucosamine (GlcNAc) within type 2 lactosamine (LacNAc, beta-D-Gal-(1-&gt;4)-beta-D-GlcNAc-) glycan attached to glycolipids and N- or O-linked glycoproteins. Fucosylates distal type 2 LacNAc and its fucosylated (H-type 2 LacNAc) and sialylated (sialyl-type 2 LacNAc) derivatives to form Lewis x (Lex) (CD15) and Lewis y (Ley) antigenic epitopes involved in cell adhesion and differentiation. Generates Lex epitopes in the brain, presumably playing a role in the maintenance of neuronal stemness and neurite outgrowth in progenitor neural cells. Fucosylates the internal type 2 LacNAc unit of the polylactosamine chain to form VIM-2 antigen that serves as recognition epitope for SELE. Can also modify milk oligosaccharides in particular type 2 tetrasaccharide LNnT. The protein is 4-galactosyl-N-acetylglucosaminide 3-alpha-L-fucosyltransferase 9 of Cricetulus griseus (Chinese hamster).